Reading from the N-terminus, the 1374-residue chain is DNA-directed RNA polymerase subunit beta (1374 aa).

The protein belongs to the RNA polymerase beta chain family. In terms of assembly, the RNAP catalytic core consists of 2 alpha, 1 beta, 1 beta' and 1 omega subunit. When a sigma factor is associated with the core the holoenzyme is formed, which can initiate transcription.

It catalyses the reaction RNA(n) + a ribonucleoside 5'-triphosphate = RNA(n+1) + diphosphate. In terms of biological role, DNA-dependent RNA polymerase catalyzes the transcription of DNA into RNA using the four ribonucleoside triphosphates as substrates. This is DNA-directed RNA polymerase subunit beta from Methylobacterium nodulans (strain LMG 21967 / CNCM I-2342 / ORS 2060).